Here is a 464-residue protein sequence, read N- to C-terminus: Glutamyl-tRNA reductase (464 aa).

Residues 47 to 50, Ser145, 150 to 152, and Gln156 each bind substrate; these read TCNR and EPQ. Residue Cys48 is the Nucleophile of the active site. 225-230 is a binding site for NADP(+); that stretch reads AAGEMN.

The protein belongs to the glutamyl-tRNA reductase family. As to quaternary structure, homodimer.

It carries out the reaction (S)-4-amino-5-oxopentanoate + tRNA(Glu) + NADP(+) = L-glutamyl-tRNA(Glu) + NADPH + H(+). The protein operates within porphyrin-containing compound metabolism; protoporphyrin-IX biosynthesis; 5-aminolevulinate from L-glutamyl-tRNA(Glu): step 1/2. Functionally, catalyzes the NADPH-dependent reduction of glutamyl-tRNA(Glu) to glutamate 1-semialdehyde (GSA). The protein is Glutamyl-tRNA reductase of Psychrobacter cryohalolentis (strain ATCC BAA-1226 / DSM 17306 / VKM B-2378 / K5).